The chain runs to 394 residues: Elongation factor Tu (394 aa).

The tr-type G domain maps to 10–204; it reads KLHINVGTIG…VLDSYIPEPK (195 aa). The tract at residues 19–26 is G1; that stretch reads GHVDHGKT. Residue 19 to 26 participates in GTP binding; that stretch reads GHVDHGKT. A Mg(2+)-binding site is contributed by Thr26. Residues 60 to 64 are G2; that stretch reads GITIN. The G3 stretch occupies residues 81 to 84; that stretch reads DCPG. Residues 81–85 and 136–139 each bind GTP; these read DCPGH and NKCD. The segment at 136 to 139 is G4; that stretch reads NKCD. The segment at 174–176 is G5; the sequence is SAL.

Belongs to the TRAFAC class translation factor GTPase superfamily. Classic translation factor GTPase family. EF-Tu/EF-1A subfamily. As to quaternary structure, monomer.

It is found in the cytoplasm. It carries out the reaction GTP + H2O = GDP + phosphate + H(+). In terms of biological role, GTP hydrolase that promotes the GTP-dependent binding of aminoacyl-tRNA to the A-site of ribosomes during protein biosynthesis. This is Elongation factor Tu from Baumannia cicadellinicola subsp. Homalodisca coagulata.